The sequence spans 229 residues: Protein MC132 (229 aa).

Interacts with host RELA (via RHD domain), ELOB, ELOC and CUL5; these interactions induce the proteasomal degradation of host RELA.

The protein resides in the host cytoplasm. In terms of biological role, inhibits host NF-kappa-B activation stimulated by IL-1 and multiple PRR viral detection pathways. Targets host NF-kappa-B component RELA/p65 for ubiquitin-dependent proteasomal degradation. This Homo sapiens (Human) protein is Protein MC132 (MC132).